The sequence spans 442 residues: Histidinol dehydrogenase (442 aa).

NAD(+) is bound by residues Tyr-138, Gln-196, and Asn-219. 3 residues coordinate substrate: Ser-245, Gln-267, and His-270. Residues Gln-267 and His-270 each coordinate Zn(2+). Catalysis depends on proton acceptor residues Glu-334 and His-335. Substrate-binding residues include His-335, Asp-368, Glu-422, and His-427. Asp-368 provides a ligand contact to Zn(2+). Residue His-427 coordinates Zn(2+).

Belongs to the histidinol dehydrogenase family. In terms of assembly, homodimer. It depends on Zn(2+) as a cofactor.

The catalysed reaction is L-histidinol + 2 NAD(+) + H2O = L-histidine + 2 NADH + 3 H(+). Its pathway is amino-acid biosynthesis; L-histidine biosynthesis; L-histidine from 5-phospho-alpha-D-ribose 1-diphosphate: step 9/9. Functionally, catalyzes the sequential NAD-dependent oxidations of L-histidinol to L-histidinaldehyde and then to L-histidine. This Pectobacterium atrosepticum (strain SCRI 1043 / ATCC BAA-672) (Erwinia carotovora subsp. atroseptica) protein is Histidinol dehydrogenase.